Here is a 62-residue protein sequence, read N- to C-terminus: Small ribosomal subunit protein eS27 (62 aa).

Residues C17, C20, C36, and C39 each contribute to the Zn(2+) site. Residues 17-39 (CNDCENEQIIFGSASRKITCVVC) form a C4-type zinc finger.

This sequence belongs to the eukaryotic ribosomal protein eS27 family. In terms of assembly, part of the 30S ribosomal subunit. It depends on Zn(2+) as a cofactor.

This chain is Small ribosomal subunit protein eS27, found in Methanosarcina mazei (strain ATCC BAA-159 / DSM 3647 / Goe1 / Go1 / JCM 11833 / OCM 88) (Methanosarcina frisia).